Here is a 1944-residue protein sequence, read N- to C-terminus: Anaphase-promoting complex subunit 1 (1944 aa).

Residues S51 and S60 each carry the phosphoserine modification. A Phosphothreonine modification is found at T291. The tract at residues 312–343 (ESPVASPFQNYSSIHSQSRSTSSPSLHSRSPS) is disordered. 7 positions are modified to phosphoserine: S313, S341, S343, S355, S362, S373, and S377. The span at 323-343 (SSIHSQSRSTSSPSLHSRSPS) shows a compositional bias: low complexity. Residues 370 to 395 (NLSSHSQSPKRHSISHSPSGSFNDSF) are disordered. Polar residues predominate over residues 384–393 (SHSPSGSFND). T537 carries the post-translational modification Phosphothreonine. A phosphoserine mark is found at S547 and S555. Y571 carries the post-translational modification Phosphotyrosine. A phosphoserine mark is found at S680, S686, and S688. A disordered region spans residues 991 to 1014 (NLPRGKSVLSSEVSSGTEAEEEDD). Positions 998–1007 (VLSSEVSSGT) are enriched in polar residues. PC repeat units lie at residues 1297 to 1325 (AAGL…PEQL), 1366 to 1404 (GATL…PEFL), 1467 to 1501 (GACL…YLSA), and 1520 to 1552 (LLSL…EMNY).

Belongs to the APC1 family. In terms of assembly, the mammalian APC/C is composed at least of 14 distinct subunits ANAPC1, ANAPC2, CDC27/APC3, ANAPC4, ANAPC5, CDC16/APC6, ANAPC7, CDC23/APC8, ANAPC10, ANAPC11, CDC26/APC12, ANAPC13, ANAPC15 and ANAPC16 that assemble into a complex of at least 19 chains with a combined molecular mass of around 1.2 MDa; APC/C interacts with FZR1 and FBXO5. In terms of processing, phosphorylated. Phosphorylation on Ser-355 occurs specifically during mitosis. As to expression, abundantly expressed in proliferating fibroblasts, juvenile testis, adult brain and epididymis.

The protein operates within protein modification; protein ubiquitination. Component of the anaphase promoting complex/cyclosome (APC/C), a cell cycle-regulated E3 ubiquitin ligase that controls progression through mitosis and the G1 phase of the cell cycle. The APC/C complex acts by mediating ubiquitination and subsequent degradation of target proteins: it mainly mediates the formation of 'Lys-11'-linked polyubiquitin chains and, to a lower extent, the formation of 'Lys-48'- and 'Lys-63'-linked polyubiquitin chains. The APC/C complex catalyzes assembly of branched 'Lys-11'-/'Lys-48'-linked branched ubiquitin chains on target proteins. The polypeptide is Anaphase-promoting complex subunit 1 (Anapc1) (Mus musculus (Mouse)).